Here is a 129-residue protein sequence, read N- to C-terminus: MLWNNKTSAKNTSSTDKGQVTESYAQQYLSKQGLRFIERNFHSRQGEIDLIMLDGDTYVFVEVKYRKSKGFGGAIAAISASKQNKVKHCITFYLHQNGLNEYNTPCRVDVVALEGDITQPQVTWLKNAF.

Belongs to the UPF0102 family.

The sequence is that of UPF0102 protein CPS_4433 from Colwellia psychrerythraea (strain 34H / ATCC BAA-681) (Vibrio psychroerythus).